The following is a 308-amino-acid chain: Elongation factor Ts (308 aa).

The tract at residues 80 to 83 (TDFV) is involved in Mg(2+) ion dislocation from EF-Tu.

The protein belongs to the EF-Ts family.

Its subcellular location is the cytoplasm. Its function is as follows. Associates with the EF-Tu.GDP complex and induces the exchange of GDP to GTP. It remains bound to the aminoacyl-tRNA.EF-Tu.GTP complex up to the GTP hydrolysis stage on the ribosome. The chain is Elongation factor Ts from Agrobacterium fabrum (strain C58 / ATCC 33970) (Agrobacterium tumefaciens (strain C58)).